We begin with the raw amino-acid sequence, 237 residues long: DCN1-like protein 5 (237 aa).

Phosphoserine occurs at positions 9, 41, and 48. Positions 46 to 232 (FSSKKCLAWF…LLDEFVEWQK (187 aa)) constitute a DCUN1 domain.

In terms of assembly, part of a complex that contains DCUN1D5, CUL1 and RBX1; this interaction is bridged by CUL1. Interacts (via the DCUN1 domain) with the unneddylated cullins: interacts with CUL1, CUL2, CUL3, CUL4A, CUL4B and CUL5; these interactions promote the cullin neddylation and the identity of the cullin dictates the affinity of the interaction. Interacts (via DCUN1 domain) with UBE2M (N-terminally acetylated form) and probably with UBE2F (N-terminally acetylated form). May also interact with regulators or subunits of cullin-RING ligases such as RBX1, RNF7, ELOB and DDB1; these interactions are bridged by cullins. Interacts with CAND1; this interaction is bridged by cullins and strongly inhibits the neddylation of cullins. These CAND-cullin-DCNL complexes can only be neddylated in the presence of a substrate adapter. Post-translationally, phosphorylation at Ser-41 is independent of cullin's interaction. Phosphorylated in response to both TICAM1 and MYD88 dependent Toll-like receptor (TLR) pathway activation. Phosphorylated in response to IL1B stimulation. In terms of tissue distribution, weakly expressed in testis, skin and immune tissues (thymus, spleen and lymph nodes).

Its subcellular location is the nucleus. It localises to the cytoplasm. The protein resides in the cytoskeleton. The protein localises to the spindle. Contributes to the neddylation of all cullins by transferring NEDD8 from N-terminally acetylated NEDD8-conjugating E2s enzyme to different cullin C-terminal domain-RBX complexes which is necessary for the activation of cullin-RING E3 ubiquitin ligases (CRLs). May play a role in DNA damage response and may participate in cell proliferation and anchorage-independent cell growth. The protein is DCN1-like protein 5 of Homo sapiens (Human).